The following is a 133-amino-acid chain: Magnetosome protein MamC (133 aa).

Over 1-5 (MAAFN) the chain is Cytoplasmic. A helical transmembrane segment spans residues 6 to 26 (LALYLSKSIPGVGVLGGVIGG). Over 27 to 67 (SAALAKNLKAKQRGEITTEEAVIDTGKEALGAGLATTVSAY) the chain is Lumenal. Residues 37–57 (KQRGEITTEEAVIDTGKEALG) form a magnetite interacting component (MIC) binds magnetite region. A helical transmembrane segment spans residues 68–88 (AAGVVGGGLVVSLGTAFAVAV). Topologically, residues 89–133 (AGKYAWDYGMEQMEAKLQEKKHQEQGGQTYGDNPDPFDPQELETP) are cytoplasmic. Residues 105–133 (LQEKKHQEQGGQTYGDNPDPFDPQELETP) are disordered.

Belongs to the magnetosome MamC family. As to quaternary structure, probably interacts with MamA.

Its subcellular location is the magnetosome membrane. Probably helps control the size of magnetite crystals; in vitro synthesis of magnetite yields larger and more well-developed magnetite crystals in the presence of purified MamC. Binds Fe(3+). The lumenal domain probably binds magnetite crystals, affecting crystal size and shape. Purified MamC self-assembles into micelles in the presence of ferric chloride hexahydrate (FeCl(3).6H(2)O); both oxygen and iron are present in the proteinaceous micelles. Whether this is relevant in vivo is unknown. The sequence is that of Magnetosome protein MamC from Magnetococcus marinus (strain ATCC BAA-1437 / JCM 17883 / MC-1).